A 626-amino-acid chain; its full sequence is Nuclear receptor subfamily 4 group A member 3 (626 aa).

The segment at 1–108 (MPCVQAQYSP…HHHHHHHHHH (108 aa)) is activation function (AF)-1 domain. The required for DNA-PK heterotrimer stretch occupies residues 1–138 (MPCVQAQYSP…PSTSMYFKQS (138 aa)). Positions 1 to 291 (MPCVQAQYSP…SRSSSSGEGT (291 aa)) are interaction with NCOA1, NCOA2, NCOA3 and KAT2B. Disordered regions lie at residues 92 to 152 (PSYH…PPQA), 192 to 211 (HFKPSPPHPPAPSPAGGHHL), and 265 to 284 (PTASSLLGESPSLPSPPSRS). The segment covering 93–110 (SYHHHHHHHHHHHHHHQQ) has biased composition (basic residues). 2 stretches are compositionally biased toward pro residues: residues 140 to 149 (PSTPTTPAFP) and 195 to 204 (PSPPHPPAPS). A compositionally biased stretch (low complexity) spans 268 to 284 (SSLLGESPSLPSPPSRS). A DNA-binding region (nuclear receptor) is located at residues 289 to 364 (EGTCAVCGDN…VGMVKEVVRT (76 aa)). 2 consecutive NR C4-type zinc fingers follow at residues 292-312 (CAVCGDNAACQHYGVRTCEGC) and 328-352 (CLANKNCPVDKRRRNRCQYCRFQKC). Positions 364–394 (TDSLKGRRGRLPSKPKSPLQQEPSQPSPPSP) are disordered. Over residues 377–387 (KPKSPLQQEPS) the composition is skewed to low complexity. The interval 379-626 (KSPLQQEPSQ…DKLFLDTLPF (248 aa)) is interaction with KAT2B. The NR LBD domain occupies 394–623 (PPICMMNALV…SIIDKLFLDT (230 aa)).

This sequence belongs to the nuclear hormone receptor family. NR4 subfamily. In terms of assembly, interacts with SIX3 (via homeobox); differentially regulates the transcriptional activities of NR4A3. Interacts with the constituents of DNA-PK heterotrimer PRKDC, XRCC6 and XRCC5; phosphorylates and prevents NR4A3 ubiquitinylation and degradation. Interacts with NCOA2; potentiates the activity of the NR4A3. Interacts with NCOA1, NCOA3, MED1 and KAT2B. Interacts with EP300 and NCOA2; mediates the recruitment of MED1 in the coactivator complex. Interacts with NR3C1 (via nuclear receptor DNA-binding domain); the interactions represses transcription activity of NR4A3 on the POMC promoter Nur response element (NurRE). Interacts with TRIM28; the interactions potentiates NR4A3 activity on NurRE promoter. Binds DNA as a monomer and homodimer. Interacts with PARP1; activates PARP1 by improving acetylation of PARP1 and suppressing the interaction between PARP1 and SIRT1. Post-translationally, phosphorylated by PRKDC. As to expression, isoform alpha is highly expressed in skeletal muscle. Isoform beta is highly expressed in skeletal muscle and low expressed in fetal brain and placenta.

The protein localises to the nucleus. In terms of biological role, transcriptional activator that binds to regulatory elements in promoter regions in a cell- and response element (target)-specific manner. Induces gene expression by binding as monomers to the NR4A1 response element (NBRE) 5'-AAAAGGTCA-3' site and as homodimers to the Nur response element (NurRE) site in the promoter of their regulated target genes. Plays a role in the regulation of proliferation, survival and differentiation of many different cell types and also in metabolism and inflammation. Mediates proliferation of vascular smooth muscle, myeloid progenitor cell and type B pancreatic cells; promotes mitogen-induced vascular smooth muscle cell proliferation through transactivation of SKP2 promoter by binding a NBRE site. Upon PDGF stimulation, stimulates vascular smooth muscle cell proliferation by regulating CCND1 and CCND2 expression. In islets, induces type B pancreatic cell proliferation through up-regulation of genes that activate cell cycle, as well as genes that cause degradation of the CDKN1A. Negatively regulates myeloid progenitor cell proliferation by repressing RUNX1 in a NBRE site-independent manner. During inner ear, plays a role as a key mediator of the proliferative growth phase of semicircular canal development. Also mediates survival of neuron and smooth muscle cells; mediates CREB-induced neuronal survival, and during hippocampus development, plays a critical role in pyramidal cell survival and axonal guidance. Is required for S phase entry of the cell cycle and survival of smooth muscle cells by inducing CCND1, resulting in RB1 phosphorylation. Binds to NBRE motif in CCND1 promoter, resulting in the activation of the promoter and CCND1 transcription. Also plays a role in inflammation; upon TNF stimulation, mediates monocyte adhesion by inducing the expression of VCAM1 and ICAM1 by binding to the NBRE consensus site. In mast cells activated by Fc-epsilon receptor cross-linking, promotes the synthesis and release of cytokines but impairs events leading to degranulation. Also plays a role in metabolism; by modulating feeding behavior; and by playing a role in energy balance by inhibiting the glucocorticoid-induced orexigenic neuropeptides AGRP expression, at least in part by forming a complex with activated NR3C1 on the AGRP- glucocorticoid response element (GRE), and thus weakening the DNA binding activity of NR3C1. Upon catecholamines stimulation, regulates gene expression that controls oxidative metabolism in skeletal muscle. Plays a role in glucose transport by regulating translocation of the SLC2A4 glucose transporter to the cell surface. Finally, during gastrulation plays a crucial role in the formation of anterior mesoderm by controlling cell migration. Inhibits adipogenesis. Also participates in cardiac hypertrophy by activating PARP1. In Homo sapiens (Human), this protein is Nuclear receptor subfamily 4 group A member 3 (NR4A3).